The sequence spans 328 residues: Lipoyl synthase (328 aa).

7 residues coordinate [4Fe-4S] cluster: C57, C62, C68, C83, C87, C90, and S298. Residues 69 to 287 (WSRGTATFML…REEGLSLGFL (219 aa)) form the Radical SAM core domain.

Belongs to the radical SAM superfamily. Lipoyl synthase family. Requires [4Fe-4S] cluster as cofactor.

It localises to the cytoplasm. The enzyme catalyses [[Fe-S] cluster scaffold protein carrying a second [4Fe-4S](2+) cluster] + N(6)-octanoyl-L-lysyl-[protein] + 2 oxidized [2Fe-2S]-[ferredoxin] + 2 S-adenosyl-L-methionine + 4 H(+) = [[Fe-S] cluster scaffold protein] + N(6)-[(R)-dihydrolipoyl]-L-lysyl-[protein] + 4 Fe(3+) + 2 hydrogen sulfide + 2 5'-deoxyadenosine + 2 L-methionine + 2 reduced [2Fe-2S]-[ferredoxin]. It participates in protein modification; protein lipoylation via endogenous pathway; protein N(6)-(lipoyl)lysine from octanoyl-[acyl-carrier-protein]: step 2/2. Its function is as follows. Catalyzes the radical-mediated insertion of two sulfur atoms into the C-6 and C-8 positions of the octanoyl moiety bound to the lipoyl domains of lipoate-dependent enzymes, thereby converting the octanoylated domains into lipoylated derivatives. This chain is Lipoyl synthase, found in Deinococcus geothermalis (strain DSM 11300 / CIP 105573 / AG-3a).